A 767-amino-acid polypeptide reads, in one-letter code: Polyketide biosynthesis protein PksE (767 aa).

Residues 1 to 312 are acyl transferase; it reads MITYVFPGQG…QRNVQAGITA (312 aa). Active-site residues include S87 and H193.

This sequence in the N-terminal section; belongs to the FabD family.

Its subcellular location is the cytoplasm. The catalysed reaction is holo-[ACP] + malonyl-CoA = malonyl-[ACP] + CoA. It functions in the pathway antibiotic biosynthesis; bacillaene biosynthesis. In terms of biological role, probably involved in some intermediate steps for the synthesis of the antibiotic polyketide bacillaene which is involved in secondary metabolism. Probably has an acyl transferase activity and could also have a flavin mononucleotide-dependent oxidoreductase activity. The sequence is that of Polyketide biosynthesis protein PksE (pksE) from Bacillus subtilis (strain 168).